Reading from the N-terminus, the 643-residue chain is Protein ecdysoneless homolog (643 aa).

2 disordered regions span residues 428–458 (EFYNSKKERKNKGKEKQEAGSSSDANMNNFD) and 501–600 (IESM…FTPV). Positions 446-456 (AGSSSDANMNN) are enriched in polar residues. Acidic residues predominate over residues 528–543 (MDFDDVEDDSEGEESN). The span at 564 to 580 (NSTLEKSFENVNQQHSS) shows a compositional bias: polar residues. The span at 581-592 (KQNEESSKTRDE) shows a compositional bias: basic and acidic residues.

The protein belongs to the ECD family.

This Arabidopsis thaliana (Mouse-ear cress) protein is Protein ecdysoneless homolog.